Consider the following 121-residue polypeptide: Small ribosomal subunit protein uS13 (121 aa).

The segment at 93–121 (RGLPVRGQNTKNNARTRKGPRRTVANKKK) is disordered. Residues 106–121 (ARTRKGPRRTVANKKK) show a composition bias toward basic residues.

It belongs to the universal ribosomal protein uS13 family. As to quaternary structure, part of the 30S ribosomal subunit. Forms a loose heterodimer with protein S19. Forms two bridges to the 50S subunit in the 70S ribosome.

Functionally, located at the top of the head of the 30S subunit, it contacts several helices of the 16S rRNA. In the 70S ribosome it contacts the 23S rRNA (bridge B1a) and protein L5 of the 50S subunit (bridge B1b), connecting the 2 subunits; these bridges are implicated in subunit movement. Contacts the tRNAs in the A and P-sites. In Bacillus pumilus (strain SAFR-032), this protein is Small ribosomal subunit protein uS13.